The primary structure comprises 130 residues: Small ribosomal subunit protein uS11 (130 aa).

It belongs to the universal ribosomal protein uS11 family. As to quaternary structure, part of the 30S ribosomal subunit. Interacts with proteins S7 and S18. Binds to IF-3.

Its function is as follows. Located on the platform of the 30S subunit, it bridges several disparate RNA helices of the 16S rRNA. Forms part of the Shine-Dalgarno cleft in the 70S ribosome. The chain is Small ribosomal subunit protein uS11 from Campylobacter fetus subsp. fetus (strain 82-40).